The chain runs to 134 residues: Late embryogenesis abundant protein 6 (134 aa).

The segment covering 31–45 (ERAMARTKEEKEIAH) has biased composition (basic and acidic residues). Disordered regions lie at residues 31-53 (ERAM…AKEA) and 80-134 (VTDH…HHHY). Positions 34 to 70 (MARTKEEKEIAHQRRKAKEAEANMDMHMAKAAHAEDK) form a coiled coil. Positions 115–127 (PPQTYHPTYPPTG) are enriched in low complexity.

The protein belongs to the LEA type 1 family.

Involved dehydration tolerance. Involved in the adaptive response of vascular plants to withstand water deficit. May possess chaperone-like activity under water deficit. The polypeptide is Late embryogenesis abundant protein 6 (Arabidopsis thaliana (Mouse-ear cress)).